Reading from the N-terminus, the 276-residue chain is MSLRWQAALLDPSLAGGWAVVHCRQQFLVDDSGVLFPRDWLKRLELPLLSEQGLGHFDGEPVFLFELDVPADVPGARWQGLRQFMQQVDPDLFRLLGYATQIGTWVSQHRFCGSCGSPMHARAGERAMYCPACGVQHYPRLSPSMIVLVTRGDELLLARSPRFAPGVYSTLAGYVEPGESVEQCVAREVREEVGVDIHPPQYIASQGWPFPHSLMLGFHAEYAGGEIVPQPEEIEDARWFHIDNLPALPARQSIARYLIELYLARRLGRPEPVLPG.

Position 82 (Arg82) interacts with substrate. Residues Cys112 and Cys115 each coordinate Zn(2+). Residue Glu125 coordinates substrate. Residues Cys130 and Cys133 each contribute to the Zn(2+) site. Tyr138 provides a ligand contact to substrate. In terms of domain architecture, Nudix hydrolase spans 139–262 (PRLSPSMIVL…SIARYLIELY (124 aa)). A divalent metal cation-binding residues include Ala172, Glu188, and Glu192. The short motif at 173–194 (GYVEPGESVEQCVAREVREEVG) is the Nudix box element. 206 to 213 (QGWPFPHS) contacts substrate. Residue Glu233 participates in a divalent metal cation binding. Ala255 is a binding site for substrate.

The protein belongs to the Nudix hydrolase family. NudC subfamily. In terms of assembly, homodimer. Mg(2+) is required as a cofactor. The cofactor is Mn(2+). Zn(2+) serves as cofactor.

The catalysed reaction is a 5'-end NAD(+)-phospho-ribonucleoside in mRNA + H2O = a 5'-end phospho-adenosine-phospho-ribonucleoside in mRNA + beta-nicotinamide D-ribonucleotide + 2 H(+). It carries out the reaction NAD(+) + H2O = beta-nicotinamide D-ribonucleotide + AMP + 2 H(+). The enzyme catalyses NADH + H2O = reduced beta-nicotinamide D-ribonucleotide + AMP + 2 H(+). MRNA decapping enzyme that specifically removes the nicotinamide adenine dinucleotide (NAD) cap from a subset of mRNAs by hydrolyzing the diphosphate linkage to produce nicotinamide mononucleotide (NMN) and 5' monophosphate mRNA. The NAD-cap is present at the 5'-end of some mRNAs and stabilizes RNA against 5'-processing. Has preference for mRNAs with a 5'-end purine. Catalyzes the hydrolysis of a broad range of dinucleotide pyrophosphates. This Stutzerimonas stutzeri (strain A1501) (Pseudomonas stutzeri) protein is NAD-capped RNA hydrolase NudC.